A 509-amino-acid chain; its full sequence is Histidine ammonia-lyase (509 aa).

A cross-link (5-imidazolinone (Ala-Gly)) is located at residues 142–144 (ASG). Serine 143 bears the 2,3-didehydroalanine (Ser) mark.

The protein belongs to the PAL/histidase family. Post-translationally, contains an active site 4-methylidene-imidazol-5-one (MIO), which is formed autocatalytically by cyclization and dehydration of residues Ala-Ser-Gly.

Its subcellular location is the cytoplasm. The catalysed reaction is L-histidine = trans-urocanate + NH4(+). The protein operates within amino-acid degradation; L-histidine degradation into L-glutamate; N-formimidoyl-L-glutamate from L-histidine: step 1/3. The protein is Histidine ammonia-lyase of Pseudomonas aeruginosa (strain UCBPP-PA14).